Consider the following 175-residue polypeptide: ATP synthase subunit b (175 aa).

The helical transmembrane segment at 19–39 (LVVGTIAFALLVFVLLKFVMP) threads the bilayer.

Belongs to the ATPase B chain family. In terms of assembly, F-type ATPases have 2 components, F(1) - the catalytic core - and F(0) - the membrane proton channel. F(1) has five subunits: alpha(3), beta(3), gamma(1), delta(1), epsilon(1). F(0) has three main subunits: a(1), b(2) and c(10-14). The alpha and beta chains form an alternating ring which encloses part of the gamma chain. F(1) is attached to F(0) by a central stalk formed by the gamma and epsilon chains, while a peripheral stalk is formed by the delta and b chains.

Its subcellular location is the cell membrane. Functionally, f(1)F(0) ATP synthase produces ATP from ADP in the presence of a proton or sodium gradient. F-type ATPases consist of two structural domains, F(1) containing the extramembraneous catalytic core and F(0) containing the membrane proton channel, linked together by a central stalk and a peripheral stalk. During catalysis, ATP synthesis in the catalytic domain of F(1) is coupled via a rotary mechanism of the central stalk subunits to proton translocation. Component of the F(0) channel, it forms part of the peripheral stalk, linking F(1) to F(0). This is ATP synthase subunit b from Salinispora tropica (strain ATCC BAA-916 / DSM 44818 / JCM 13857 / NBRC 105044 / CNB-440).